A 534-amino-acid polypeptide reads, in one-letter code: Probable bifunctional tRNA threonylcarbamoyladenosine biosynthesis protein (534 aa).

The interval Met-1–Trp-325 is kae1. 3 residues coordinate Fe cation: His-108, His-112, and Tyr-129. Residues Tyr-129–Gly-133, Asp-161, Gly-174, Glu-178, and Asn-258 each bind L-threonylcarbamoyladenylate. Asp-286 is a Fe cation binding site. The region spanning Leu-335–Asp-534 is the Protein kinase domain. ATP-binding positions include Leu-340–Ile-348 and Lys-361. Asp-451 serves as the catalytic Proton acceptor; for kinase activity.

This sequence in the N-terminal section; belongs to the KAE1 / TsaD family. In the C-terminal section; belongs to the protein kinase superfamily. Tyr protein kinase family. BUD32 subfamily. In terms of assembly, component of the KEOPS complex that consists of Kae1, Bud32, Cgi121 and Pcc1; the whole complex dimerizes. Fe(2+) is required as a cofactor.

Its subcellular location is the cytoplasm. It catalyses the reaction L-seryl-[protein] + ATP = O-phospho-L-seryl-[protein] + ADP + H(+). The enzyme catalyses L-threonyl-[protein] + ATP = O-phospho-L-threonyl-[protein] + ADP + H(+). The catalysed reaction is L-threonylcarbamoyladenylate + adenosine(37) in tRNA = N(6)-L-threonylcarbamoyladenosine(37) in tRNA + AMP + H(+). Functionally, required for the formation of a threonylcarbamoyl group on adenosine at position 37 (t(6)A37) in tRNAs that read codons beginning with adenine. Is a component of the KEOPS complex that is probably involved in the transfer of the threonylcarbamoyl moiety of threonylcarbamoyl-AMP (TC-AMP) to the N6 group of A37. The Kae1 domain likely plays a direct catalytic role in this reaction. The Bud32 domain probably displays kinase activity that regulates Kae1 function. In Methanothermobacter thermautotrophicus (strain ATCC 29096 / DSM 1053 / JCM 10044 / NBRC 100330 / Delta H) (Methanobacterium thermoautotrophicum), this protein is Probable bifunctional tRNA threonylcarbamoyladenosine biosynthesis protein.